A 465-amino-acid chain; its full sequence is Trigger factor (465 aa).

Positions 163 to 248 (GDVINFNFKG…INKIKENQPA (86 aa)) constitute a PPIase FKBP-type domain. The tract at residues 431–465 (EIVNKNQNDNEIEQDKEQKDNNEEKIKQENNLENK) is disordered. Basic and acidic residues predominate over residues 443 to 465 (EQDKEQKDNNEEKIKQENNLENK).

This sequence belongs to the FKBP-type PPIase family. Tig subfamily.

The protein localises to the cytoplasm. The catalysed reaction is [protein]-peptidylproline (omega=180) = [protein]-peptidylproline (omega=0). Involved in protein export. Acts as a chaperone by maintaining the newly synthesized protein in an open conformation. Functions as a peptidyl-prolyl cis-trans isomerase. This Mesomycoplasma hyopneumoniae (strain J / ATCC 25934 / NCTC 10110) (Mycoplasma hyopneumoniae) protein is Trigger factor.